The chain runs to 538 residues: Xylosidase/arabinosidase 43B (538 aa).

The active-site Proton donor is the Glu367.

This sequence belongs to the glycosyl hydrolase 43 family.

It catalyses the reaction Hydrolysis of (1-&gt;4)-beta-D-xylans, to remove successive D-xylose residues from the non-reducing termini.. The enzyme catalyses Hydrolysis of terminal non-reducing alpha-L-arabinofuranoside residues in alpha-L-arabinosides.. Its activity is regulated as follows. Activity is inhibited by Ag(+), Li(+), Cu(2+), Cr(3+), Co(3+), Ni(2+), Mg(2+), Zn(2+), EDTA, SDS and beta-mercaptoethanol; but not by Mn(2+), Pb(2+), Ca(2+) and Fe(3+). Bifunctional beta-xylosidase/alpha-L-arabinosidases with a low level of xylanase activity. Is most active on 4-nitrophenyl beta-D-xylopyranoside (pNPX) (defined as 100%), moderate on p-nitrophenyl-alpha-L-arabinofuranoside (pNPA) (56.6%), and weak on beechwood xylan (5.7%) and birchwood xylan (2.7%). Is able to attack xylooligosacchardies with degrees of polymerisation of 2-5, releasing the amounts of reducing sugars in the order of xylopentose &gt; xylotetraose &gt; xylotriose &gt; xylobiose, i.e. the rate of xylose released from xylooligosacchardies increased with the chain length. No activity was detected in the presence of carboxymethyl cellulose-sodium (CMC-Na), sugar beet arabinan, AZCL-arabinan (debranched), 4-nitrophenyl a-D - galactopyranoside, 2-nitrophenyl beta-D-galactopyranoside, and 4-nitrophenyl alpha-D-glucopyranoside. The polypeptide is Xylosidase/arabinosidase 43B (Humicola insolens (Soft-rot fungus)).